The following is a 545-amino-acid chain: CTP synthase (545 aa).

Residues 1 to 266 form an amidoligase domain region; sequence MTTKYIFVTG…DSYFTERFGL (266 aa). Residue Ser14 participates in CTP binding. Ser14 provides a ligand contact to UTP. Residues 15–20 and Asp72 contribute to the ATP site; that span reads SLGKGI. Mg(2+) contacts are provided by Asp72 and Glu140. CTP is bound by residues 147-149, 187-192, and Lys223; these read DIE and KTKPTQ. UTP-binding positions include 187–192 and Lys223; that span reads KTKPTQ. 239 to 241 is an ATP binding site; the sequence is KDV. The region spanning 291 to 542 is the Glutamine amidotransferase type-1 domain; sequence TIGMVGKYVS…VKAAGEYQKR (252 aa). An L-glutamine-binding site is contributed by Gly352. Residue Cys379 is the Nucleophile; for glutamine hydrolysis of the active site. Residues 380–383, Glu403, and Arg470 each bind L-glutamine; that span reads LGMQ. Active-site residues include His515 and Glu517.

The protein belongs to the CTP synthase family. As to quaternary structure, homotetramer.

It carries out the reaction UTP + L-glutamine + ATP + H2O = CTP + L-glutamate + ADP + phosphate + 2 H(+). It catalyses the reaction L-glutamine + H2O = L-glutamate + NH4(+). The enzyme catalyses UTP + NH4(+) + ATP = CTP + ADP + phosphate + 2 H(+). It participates in pyrimidine metabolism; CTP biosynthesis via de novo pathway; CTP from UDP: step 2/2. Allosterically activated by GTP, when glutamine is the substrate; GTP has no effect on the reaction when ammonia is the substrate. The allosteric effector GTP functions by stabilizing the protein conformation that binds the tetrahedral intermediate(s) formed during glutamine hydrolysis. Inhibited by the product CTP, via allosteric rather than competitive inhibition. Functionally, catalyzes the ATP-dependent amination of UTP to CTP with either L-glutamine or ammonia as the source of nitrogen. Regulates intracellular CTP levels through interactions with the four ribonucleotide triphosphates. This is CTP synthase from Aeromonas hydrophila subsp. hydrophila (strain ATCC 7966 / DSM 30187 / BCRC 13018 / CCUG 14551 / JCM 1027 / KCTC 2358 / NCIMB 9240 / NCTC 8049).